The sequence spans 513 residues: Coiled-coil domain-containing protein 102B (513 aa).

The segment at 1 to 217 (MNLDSIHRLI…IDSLKLSEEM (217 aa)) is required for centriolar localization and for interaction with CEP250, CROCC, LRRC45 and NEK2. Phosphoserine is present on residues Ser-21, Ser-22, Ser-34, Ser-135, Ser-142, Ser-194, and Ser-210. A coiled-coil region spans residues 72–142 (ELRLRELEEV…ELSTLKKKQS (71 aa)). 2 coiled-coil regions span residues 268–337 (QKIL…ESKS) and 363–513 (WDKR…LQNW). Phosphoserine occurs at positions 401, 404, and 406. Positions 493–513 (LDEEKERNENLETELRHLQNW) are disordered.

As to quaternary structure, interacts (via N-terminus) with centriolar protein CEP250/CNAP1; the interaction results in recruitment of CCDC102B to the proximal ends of centrioles. Interacts (via N-terminus) with CROCC/rootletin and LRRC45. Interacts (via N-terminus) with serine/threonine-protein kinase NEK2; the interaction results in phosphorylation of CCDC102B. Post-translationally, phosphorylated directly or indirectly by NEK2 during mitosis which causes dissociation of CCDC102B from the centrosome and allows for centrosome separation.

The protein localises to the cytoplasm. It localises to the cytoskeleton. Its subcellular location is the microtubule organizing center. It is found in the centrosome. The protein resides in the centriole. During interphase, forms fibers at the proximal ends of centrioles to maintain centrosome cohesion. During mitosis, dissociates from the centrosome following phosphorylation to allow centrosome separation. Contributes to CROCC/rootletin filament formation. In Homo sapiens (Human), this protein is Coiled-coil domain-containing protein 102B (CCDC102B).